Here is a 52-residue protein sequence, read N- to C-terminus: MVNNDAKIGRREFYDRVESVRPKSPPRERPTYTYSNSRTVDGYSNRGPRADF.

The interval 1-52 is disordered; sequence MVNNDAKIGRREFYDRVESVRPKSPPRERPTYTYSNSRTVDGYSNRGPRADF. Basic and acidic residues predominate over residues 7–30; sequence KIGRREFYDRVESVRPKSPPRERP.

This is an uncharacterized protein from Dictyostelium discoideum (Social amoeba).